Here is a 1693-residue protein sequence, read N- to C-terminus: Latrophilin Cirl (1693 aa).

Residues methionine 1–arginine 774 lie on the Extracellular side of the membrane. An SUEL-type lectin domain is found at alanine 30–valine 119. 4 N-linked (GlcNAc...) asparagine glycosylation sites follow: asparagine 147, asparagine 260, asparagine 306, and asparagine 345. Residues proline 190–alanine 309 form a disordered region. Polar residues-rich tracts occupy residues serine 259 to isoleucine 269 and lysine 287 to alanine 309. The segment at serine 379–serine 406 is disordered. Residues threonine 390 to serine 399 show a composition bias toward low complexity. Residues asparagine 405, asparagine 662, asparagine 710, and asparagine 737 are each glycosylated (N-linked (GlcNAc...) asparagine). One can recognise a GAIN-B domain in the interval arginine 568 to histidine 761. Cystine bridges form between cysteine 716/cysteine 743 and cysteine 731/cysteine 745. A GPS region spans residues cysteine 716–histidine 761. The helical transmembrane segment at isoleucine 775–leucine 795 threads the bilayer. At lysine 796 to threonine 808 the chain is on the cytoplasmic side. Residues serine 809–isoleucine 829 traverse the membrane as a helical segment. Over glutamate 830–serine 835 the chain is Extracellular. The helical transmembrane segment at isoleucine 836–phenylalanine 856 threads the bilayer. At cysteine 857–valine 882 the chain is on the cytoplasmic side. Residues asparagine 883–isoleucine 903 form a helical membrane-spanning segment. Residues asparagine 904 to phenylalanine 927 are Extracellular-facing. The helical transmembrane segment at valine 928–isoleucine 948 threads the bilayer. At methionine 949–serine 975 the chain is on the cytoplasmic side. A helical membrane pass occupies residues phenylalanine 976 to alanine 996. Topologically, residues lysine 997 to threonine 1003 are extracellular. The chain crosses the membrane as a helical span at residues glycine 1004–phenylalanine 1024. The Cytoplasmic segment spans residues histidine 1025–lysine 1693. Positions proline 1089–threonine 1109 are disordered. Phosphoserine is present on residues serine 1165, serine 1256, and serine 1263. 4 disordered regions span residues lysine 1237–arginine 1264, lysine 1279–proline 1362, serine 1450–glutamine 1529, and serine 1596–leucine 1678. The span at glutamine 1307 to leucine 1323 shows a compositional bias: low complexity. Residues serine 1324 and serine 1325 each carry the phosphoserine modification. Positions leucine 1337–leucine 1357 are enriched in low complexity. Over residues arginine 1464–glutamine 1475 the composition is skewed to polar residues. 2 stretches are compositionally biased toward acidic residues: residues aspartate 1485–threonine 1498 and cysteine 1508–aspartate 1521. Residues glutamine 1640–histidine 1663 show a composition bias toward low complexity.

The protein belongs to the G-protein coupled receptor 2 family. LN-TM7 subfamily. In terms of assembly, forms a heterodimer, consisting of a large extracellular region non-covalently linked to a seven-transmembrane moiety. Post-translationally, proteolytically cleaved into 2 subunits, an extracellular subunit and a seven-transmembrane subunit.

The protein resides in the cell membrane. The chain is Latrophilin Cirl from Drosophila pseudoobscura pseudoobscura (Fruit fly).